The chain runs to 211 residues: Nucleoside triphosphate pyrophosphatase (211 aa).

The active-site Proton acceptor is the Asp75.

It belongs to the Maf family. A divalent metal cation serves as cofactor.

The protein localises to the cytoplasm. It catalyses the reaction a ribonucleoside 5'-triphosphate + H2O = a ribonucleoside 5'-phosphate + diphosphate + H(+). It carries out the reaction a 2'-deoxyribonucleoside 5'-triphosphate + H2O = a 2'-deoxyribonucleoside 5'-phosphate + diphosphate + H(+). Functionally, nucleoside triphosphate pyrophosphatase. May have a dual role in cell division arrest and in preventing the incorporation of modified nucleotides into cellular nucleic acids. The chain is Nucleoside triphosphate pyrophosphatase from Prochlorococcus marinus (strain NATL1A).